We begin with the raw amino-acid sequence, 41 residues long: Photosystem I reaction center subunit IX (41 aa).

The chain crosses the membrane as a helical span at residues 7–27 (YLSTAPVVALIWFTFTAGLLI).

The protein belongs to the PsaJ family.

Its subcellular location is the plastid. It localises to the chloroplast thylakoid membrane. In terms of biological role, may help in the organization of the PsaE and PsaF subunits. The chain is Photosystem I reaction center subunit IX from Pleurastrum terricola (Filamentous green alga).